A 244-amino-acid polypeptide reads, in one-letter code: tRNA (guanine-N(7)-)-methyltransferase (244 aa).

Residues E42, D67, D94, and D116 each coordinate S-adenosyl-L-methionine. The active site involves D116. Residues K120, D150, and 191–194 (TYYE) each bind substrate.

It belongs to the class I-like SAM-binding methyltransferase superfamily. TrmB family.

The catalysed reaction is guanosine(46) in tRNA + S-adenosyl-L-methionine = N(7)-methylguanosine(46) in tRNA + S-adenosyl-L-homocysteine. It functions in the pathway tRNA modification; N(7)-methylguanine-tRNA biosynthesis. In terms of biological role, catalyzes the formation of N(7)-methylguanine at position 46 (m7G46) in tRNA. The protein is tRNA (guanine-N(7)-)-methyltransferase of Porphyromonas gingivalis (strain ATCC BAA-308 / W83).